Consider the following 244-residue polypeptide: Small ribosomal subunit protein uS3 (244 aa).

A KH type-2 domain is found at 39 to 107; the sequence is VREMLRKKLA…PAHINVTEVR (69 aa). The tract at residues 213–244 is disordered; sequence VGQEKQDDSPRNDRNDRGDRGDRPSRPAREAR. Basic and acidic residues predominate over residues 216–244; it reads EKQDDSPRNDRNDRGDRGDRPSRPAREAR.

It belongs to the universal ribosomal protein uS3 family. As to quaternary structure, part of the 30S ribosomal subunit. Forms a tight complex with proteins S10 and S14.

Functionally, binds the lower part of the 30S subunit head. Binds mRNA in the 70S ribosome, positioning it for translation. This chain is Small ribosomal subunit protein uS3, found in Xanthomonas euvesicatoria pv. vesicatoria (strain 85-10) (Xanthomonas campestris pv. vesicatoria).